The following is a 130-amino-acid chain: uncharacterized protein (130 aa).

The signal sequence occupies residues 1-19 (MKVLGNILWWAFVGFMAYA).

This is an uncharacterized protein from Escherichia coli (strain K12).